A 239-amino-acid polypeptide reads, in one-letter code: 1-(5-phosphoribosyl)-5-[(5-phosphoribosylamino)methylideneamino] imidazole-4-carboxamide isomerase (239 aa).

Asp8 acts as the Proton acceptor in catalysis. Asp129 functions as the Proton donor in the catalytic mechanism.

It belongs to the HisA/HisF family.

It localises to the cytoplasm. The catalysed reaction is 1-(5-phospho-beta-D-ribosyl)-5-[(5-phospho-beta-D-ribosylamino)methylideneamino]imidazole-4-carboxamide = 5-[(5-phospho-1-deoxy-D-ribulos-1-ylimino)methylamino]-1-(5-phospho-beta-D-ribosyl)imidazole-4-carboxamide. Its pathway is amino-acid biosynthesis; L-histidine biosynthesis; L-histidine from 5-phospho-alpha-D-ribose 1-diphosphate: step 4/9. This Legionella pneumophila subsp. pneumophila (strain Philadelphia 1 / ATCC 33152 / DSM 7513) protein is 1-(5-phosphoribosyl)-5-[(5-phosphoribosylamino)methylideneamino] imidazole-4-carboxamide isomerase.